Consider the following 37-residue polypeptide: Large ribosomal subunit protein bL36c (37 aa).

The protein belongs to the bacterial ribosomal protein bL36 family.

It localises to the plastid. The protein localises to the chloroplast. This is Large ribosomal subunit protein bL36c from Welwitschia mirabilis (Tree tumbo).